The chain runs to 309 residues: DSC E3 ubiquitin ligase complex subunit C (309 aa).

A glycan (N-linked (GlcNAc...) asparagine) is linked at N61. 2 disordered regions span residues 88 to 110 (LPPSPSRTPVVQEDATTVKGKGK) and 148 to 177 (EQADEGYTGRKKQQQPPPSTTSAPRGFDRL). A run of 2 helical transmembrane segments spans residues 257-277 (DDMLWGAVMGFFWPVGCAMWL) and 289-309 (GLAVFVGVVINVAFGAMRIMN).

This sequence belongs to the dsc3 family. As to quaternary structure, component of the DSC E3 ubiquitin ligase complex composed of dscA, dscB, dscC and dscD.

It localises to the endoplasmic reticulum membrane. The protein operates within protein modification; protein ubiquitination. Functionally, component of the DSC E3 ubiquitin ligase complex which is required for the srbA transcriptional activator proteolytic cleavage to release the soluble transcription factor from the membrane in low oxygen or sterol conditions. Required for growth during hypoxia and triazole drug susceptibility, as well as for virulence in a murine model of invasive pulmonary aspergillosis (IPA). This chain is DSC E3 ubiquitin ligase complex subunit C, found in Aspergillus fumigatus (strain CBS 144.89 / FGSC A1163 / CEA10) (Neosartorya fumigata).